A 215-amino-acid polypeptide reads, in one-letter code: MSDNAQLTGLCDRFRGFYPVVIDVETAGFNAKTDALLEIAAITLKMDEQGWLMPDTTLHFHVEPFVGANLQPEALAFNGIDPNDPDRGAVSEYEALHEIFKVVRKGIKASGCNRAIMVAHNANFDHSFMMAAAERASLKRNPFHPFATFDTAALAGLALGQTVLSKACQTAGMDFDSTQAHSALYDTERTAVLFCEIVNRWKRLGGWPLSAAEEV.

The Exonuclease domain maps to 20–194 (VVIDVETAGF…YDTERTAVLF (175 aa)). Mg(2+)-binding residues include D23, E25, H181, and D186. H181 functions as the Proton donor/acceptor in the catalytic mechanism.

Belongs to the RNase T family. Homodimer. Requires Mg(2+) as cofactor.

Trims short 3' overhangs of a variety of RNA species, leaving a one or two nucleotide 3' overhang. Responsible for the end-turnover of tRNA: specifically removes the terminal AMP residue from uncharged tRNA (tRNA-C-C-A). Also appears to be involved in tRNA biosynthesis, especially in strains lacking other exoribonucleases. Its function is as follows. A general regulator of small RNAs (sRNA), contributes to their degradation. Upon overexpression suppresses sRNA-mediated RhyB-silencing of multiple RNA targets; overexpression leads to nearly complete loss of RhyB sRNA. The chain is Ribonuclease T from Escherichia coli (strain K12).